A 184-amino-acid chain; its full sequence is ATP synthase subunit b, chloroplastic (184 aa).

A helical transmembrane segment spans residues 27–49 (LATNLINLSVVLGVLIFFGKGVL).

It belongs to the ATPase B chain family. As to quaternary structure, F-type ATPases have 2 components, F(1) - the catalytic core - and F(0) - the membrane proton channel. F(1) has five subunits: alpha(3), beta(3), gamma(1), delta(1), epsilon(1). F(0) has four main subunits: a(1), b(1), b'(1) and c(10-14). The alpha and beta chains form an alternating ring which encloses part of the gamma chain. F(1) is attached to F(0) by a central stalk formed by the gamma and epsilon chains, while a peripheral stalk is formed by the delta, b and b' chains.

The protein localises to the plastid. It is found in the chloroplast thylakoid membrane. F(1)F(0) ATP synthase produces ATP from ADP in the presence of a proton or sodium gradient. F-type ATPases consist of two structural domains, F(1) containing the extramembraneous catalytic core and F(0) containing the membrane proton channel, linked together by a central stalk and a peripheral stalk. During catalysis, ATP synthesis in the catalytic domain of F(1) is coupled via a rotary mechanism of the central stalk subunits to proton translocation. Its function is as follows. Component of the F(0) channel, it forms part of the peripheral stalk, linking F(1) to F(0). This is ATP synthase subunit b, chloroplastic from Guizotia abyssinica (Niger).